Here is a 293-residue protein sequence, read N- to C-terminus: Acetylglutamate kinase (293 aa).

Residues 68–69 (GG), R90, and N189 contribute to the substrate site.

This sequence belongs to the acetylglutamate kinase family. ArgB subfamily.

It is found in the cytoplasm. The enzyme catalyses N-acetyl-L-glutamate + ATP = N-acetyl-L-glutamyl 5-phosphate + ADP. It functions in the pathway amino-acid biosynthesis; L-arginine biosynthesis; N(2)-acetyl-L-ornithine from L-glutamate: step 2/4. Functionally, catalyzes the ATP-dependent phosphorylation of N-acetyl-L-glutamate. The polypeptide is Acetylglutamate kinase (Mycobacterium ulcerans (strain Agy99)).